Here is a 477-residue protein sequence, read N- to C-terminus: MSPQTETKASVGFKAGVKEYKLAYYTPEYETKDTDILAAFRVTPQPGVPPEEAGAAVAAESSTGTWTTVWTDGLTSLDRYKGRCYHIEPVPGETDQYICYVAYPLDLFEEGSVTNMFTSIVGNAFGFKALRALRLEDLRISPAYIKTFQGPPHGIQVERDKLNKYGRPLLGCTIKPKLGLSAKNYGRACYECLRGGLDFTKDDENVNSQPFMRWRDRFLFCAEAIYKSQAETGEIKGHYLNATAGTCEEMMKRAVFARELGVPIIMHDYLTGGFTANTSLAHYCRDNGLLLHIHRAMHAVIDRQKNHGIHFRVLAKALRMSGGDHIHSGTVVGKLEGERDITLGFVDLLRDDFIEKDRSRGIYFTQDWVSLPGVIPVASGGIHVWHMPALTEIFGDDSVLQFGGGTLGHPWGNAPGAVANRVALEACVKARNEGRDLAQEGNEIIHEACKWSPELAAACEVWREIVFNFAAVDVLDK.

The propeptide occupies 1 to 2 (MS). P3 is modified (N-acetylproline). An N6,N6,N6-trimethyllysine modification is found at K14. Residues N123 and T173 each coordinate substrate. K175 serves as the catalytic Proton acceptor. K177 serves as a coordination point for substrate. The Mg(2+) site is built by K201, D203, and E204. K201 bears the N6-carboxylysine mark. H294 functions as the Proton acceptor in the catalytic mechanism. Positions 295, 327, and 379 each coordinate substrate.

It belongs to the RuBisCO large chain family. Type I subfamily. As to quaternary structure, heterohexadecamer of 8 large chains and 8 small chains; disulfide-linked. The disulfide link is formed within the large subunit homodimers. Requires Mg(2+) as cofactor. The disulfide bond which can form in the large chain dimeric partners within the hexadecamer appears to be associated with oxidative stress and protein turnover.

The protein localises to the plastid. The enzyme catalyses 2 (2R)-3-phosphoglycerate + 2 H(+) = D-ribulose 1,5-bisphosphate + CO2 + H2O. It catalyses the reaction D-ribulose 1,5-bisphosphate + O2 = 2-phosphoglycolate + (2R)-3-phosphoglycerate + 2 H(+). In terms of biological role, ruBisCO catalyzes two reactions: the carboxylation of D-ribulose 1,5-bisphosphate, the primary event in carbon dioxide fixation, as well as the oxidative fragmentation of the pentose substrate in the photorespiration process. Both reactions occur simultaneously and in competition at the same active site. This Lathraea clandestina (Purple toothwort) protein is Ribulose bisphosphate carboxylase large chain (rbcL).